The primary structure comprises 231 residues: Ribosomal RNA small subunit methyltransferase G (231 aa).

S-adenosyl-L-methionine-binding positions include Gly75, Gly125–Glu126, and Arg140. Residues Ala204 to Glu213 are compositionally biased toward acidic residues. The segment at Ala204 to Gly231 is disordered.

Belongs to the methyltransferase superfamily. RNA methyltransferase RsmG family.

It localises to the cytoplasm. Specifically methylates the N7 position of a guanine in 16S rRNA. The sequence is that of Ribosomal RNA small subunit methyltransferase G from Rhodopirellula baltica (strain DSM 10527 / NCIMB 13988 / SH1).